A 1479-amino-acid polypeptide reads, in one-letter code: Type VII secretion system protein EssC (1479 aa).

The tract at residues methionine 1–glutamate 189 is required for substrate secretion, protein missing this segment is unstable. At methionine 1–asparagine 229 the chain is on the cytoplasmic side. A helical membrane pass occupies residues threonine 230–valine 252. Over arginine 253–glycine 256 the chain is Extracellular. The helical transmembrane segment at isoleucine 257–serine 279 threads the bilayer. The Cytoplasmic segment spans residues glutamate 280–lysine 1479. FtsK domains lie at aspartate 652–asparagine 846 and glutamine 997–serine 1183. ATP is bound by residues glycine 672–serine 679 and glycine 1014–threonine 1021. The tract at residues methionine 1249–lysine 1479 is required for substrate secretion, truncated protein is stable.

It belongs to the EssC family. Homooligomer. Interacts with EsaE.

It is found in the cell membrane. Its function is as follows. Component of the type VII secretion system (Ess). Required for the secretion of substrates including EsxA and EsxB. However, unable to support secretion of the substrate protein EsxC. This is Type VII secretion system protein EssC from Staphylococcus aureus (strain NCTC 8325 / PS 47).